The sequence spans 853 residues: Envelope glycoprotein gp160 (853 aa).

A signal peptide spans 1–31; sequence MRARGIERNCQNWWKWGIMLLGILMTCSAAD. The Extracellular segment spans residues 32 to 681; sequence NLWVTVYYGV…ITQWLWYIKI (650 aa). An intrachain disulfide couples cysteine 53 to cysteine 73. Asparagine 87, asparagine 129, asparagine 137, asparagine 143, asparagine 153, asparagine 157, asparagine 183, asparagine 188, asparagine 198, asparagine 235, asparagine 242, asparagine 263, asparagine 277, and asparagine 290 each carry an N-linked (GlcNAc...) asparagine; by host glycan. Intrachain disulfides connect cysteine 118–cysteine 206, cysteine 125–cysteine 197, cysteine 130–cysteine 154, cysteine 219–cysteine 248, and cysteine 229–cysteine 240. Positions 130–153 are V1; that stretch reads CSDELRNNGTMGNNVTTEEKGMKN. Residues 154-197 form a V2 region; it reads CSFNVTTVLKDKKQQVYALFYRLDIVPIDNDSSTNSTNYRLINC. A V3 region spans residues 297–329; sequence CARPYQNTRQRTPIGLGQSLYTTRSRSIIGQAH. Cysteines 297 and 330 form a disulfide. N-linked (GlcNAc...) asparagine; by host glycans are attached at residues asparagine 331 and asparagine 353. The CD4-binding loop stretch occupies residues 362-372; it reads SSGGDPEITTH. Disulfide bonds link cysteine 376/cysteine 442 and cysteine 383/cysteine 416. Residues 383-416 are V4; that stretch reads CNTSGLFNSTWNISAWNNITESNNSTNTNITLQC. N-linked (GlcNAc...) asparagine; by host glycans are attached at residues asparagine 384, asparagine 390, asparagine 394, asparagine 400, asparagine 405, asparagine 406, asparagine 411, asparagine 445, asparagine 458, asparagine 459, and asparagine 462. V5 stretches follow at residues 457–468 and 460–468; these read INNSTNETFRPG and STNETFRPG. The segment at 509–529 is fusion peptide; the sequence is AIGLGAMFLGFLGAAGSTMGA. Positions 571–589 are immunosuppression; sequence KQLQARILAVERYLKDQQL. Residues cysteine 595 and cysteine 601 are joined by a disulfide bond. Residues asparagine 608, asparagine 613, asparagine 622, and asparagine 634 are each glycosylated (N-linked (GlcNAc...) asparagine; by host). Residues 630-664 are a coiled coil; the sequence is REIDNYTGLIYSLIEESQTQQEKNEKELLELDKWA. The MPER; binding to GalCer stretch occupies residues 659-680; the sequence is ELDKWASLWNWFSITQWLWYIK. A helical membrane pass occupies residues 682-702; it reads FIMIIGGLIGLRIVFAVLSLV. Over 703 to 853 the chain is Cytoplasmic; that stretch reads NRVRQGYSPL…IRQGLERSLL (151 aa). Positions 709–712 match the YXXL motif; contains endocytosis signal motif; sequence YSPL. Positions 716 to 738 are disordered; sequence TLLPAPRGPDRPEGTEEEGGERG. Over residues 723 to 738 the composition is skewed to basic and acidic residues; the sequence is GPDRPEGTEEEGGERG. S-palmitoyl cysteine; by host attachment occurs at residues cysteine 761 and cysteine 834. The Di-leucine internalization motif motif lies at 852-853; that stretch reads LL.

It belongs to the HIV-1 env protein family. The mature envelope protein (Env) consists of a homotrimer of non-covalently associated gp120-gp41 heterodimers. The resulting complex protrudes from the virus surface as a spike. There seems to be as few as 10 spikes on the average virion. Interacts with host CD4, CCR5 and CXCR4. Gp120 also interacts with the C-type lectins CD209/DC-SIGN and CLEC4M/DC-SIGNR (collectively referred to as DC-SIGN(R)). Gp120 and gp41 interact with GalCer. Gp120 interacts with host ITGA4/ITGB7 complex; on CD4+ T-cells, this interaction results in rapid activation of integrin ITGAL/LFA-1, which facilitates efficient cell-to-cell spreading of HIV-1. Gp120 interacts with cell-associated heparan sulfate; this interaction increases virus infectivity on permissive cells and may be involved in infection of CD4- cells. As to quaternary structure, the mature envelope protein (Env) consists of a homotrimer of non-covalently associated gp120-gp41 heterodimers. The resulting complex protrudes from the virus surface as a spike. There seems to be as few as 10 spikes on the average virion. Post-translationally, highly glycosylated by host. The high number of glycan on the protein is reffered to as 'glycan shield' because it contributes to hide protein sequence from adaptive immune system. Palmitoylation of the transmembrane protein and of Env polyprotein (prior to its proteolytic cleavage) is essential for their association with host cell membrane lipid rafts. Palmitoylation is therefore required for envelope trafficking to classical lipid rafts, but not for viral replication. In terms of processing, specific enzymatic cleavages in vivo yield mature proteins. Envelope glycoproteins are synthesized as an inactive precursor that is heavily N-glycosylated and processed likely by host cell furin in the Golgi to yield the mature SU and TM proteins. The cleavage site between SU and TM requires the minimal sequence [KR]-X-[KR]-R. About 2 of the 9 disulfide bonds of gp41 are reduced by P4HB/PDI, following binding to CD4 receptor.

It localises to the virion membrane. The protein resides in the host cell membrane. The protein localises to the host endosome membrane. In terms of biological role, oligomerizes in the host endoplasmic reticulum into predominantly trimers. In a second time, gp160 transits in the host Golgi, where glycosylation is completed. The precursor is then proteolytically cleaved in the trans-Golgi and thereby activated by cellular furin or furin-like proteases to produce gp120 and gp41. Attaches the virus to the host lymphoid cell by binding to the primary receptor CD4. This interaction induces a structural rearrangement creating a high affinity binding site for a chemokine coreceptor like CXCR4 and/or CCR5. Acts as a ligand for CD209/DC-SIGN and CLEC4M/DC-SIGNR, which are respectively found on dendritic cells (DCs), and on endothelial cells of liver sinusoids and lymph node sinuses. These interactions allow capture of viral particles at mucosal surfaces by these cells and subsequent transmission to permissive cells. HIV subverts the migration properties of dendritic cells to gain access to CD4+ T-cells in lymph nodes. Virus transmission to permissive T-cells occurs either in trans (without DCs infection, through viral capture and transmission), or in cis (following DCs productive infection, through the usual CD4-gp120 interaction), thereby inducing a robust infection. In trans infection, bound virions remain infectious over days and it is proposed that they are not degraded, but protected in non-lysosomal acidic organelles within the DCs close to the cell membrane thus contributing to the viral infectious potential during DCs' migration from the periphery to the lymphoid tissues. On arrival at lymphoid tissues, intact virions recycle back to DCs' cell surface allowing virus transmission to CD4+ T-cells. Functionally, acts as a class I viral fusion protein. Under the current model, the protein has at least 3 conformational states: pre-fusion native state, pre-hairpin intermediate state, and post-fusion hairpin state. During fusion of viral and target intracellular membranes, the coiled coil regions (heptad repeats) assume a trimer-of-hairpins structure, positioning the fusion peptide in close proximity to the C-terminal region of the ectodomain. The formation of this structure appears to drive apposition and subsequent fusion of viral and target cell membranes. Complete fusion occurs in host cell endosomes and is dynamin-dependent, however some lipid transfer might occur at the plasma membrane. The virus undergoes clathrin-dependent internalization long before endosomal fusion, thus minimizing the surface exposure of conserved viral epitopes during fusion and reducing the efficacy of inhibitors targeting these epitopes. Membranes fusion leads to delivery of the nucleocapsid into the cytoplasm. The chain is Envelope glycoprotein gp160 from Human immunodeficiency virus type 1 group M subtype D (isolate ELI) (HIV-1).